A 21-amino-acid chain; its full sequence is uncharacterized protein (21 aa).

This is an uncharacterized protein from Dictyostelium discoideum (Social amoeba).